We begin with the raw amino-acid sequence, 832 residues long: Vacuolar transmembrane transporter penV (832 aa).

A run of 2 helical transmembrane segments spans residues 39 to 59 (LYTQ…AFCI) and 117 to 137 (FFKF…AIIL). Positions 152–171 (WDNPPGNKTTSPIDGSEKEK) are disordered. N-linked (GlcNAc...) asparagine glycosylation is present at asparagine 158. Residues 178–198 (YLWIYVLFAYVFSGLAIYMLL) form a helical membrane-spanning segment. The N-linked (GlcNAc...) asparagine glycan is linked to asparagine 214. The segment at 291–322 (NDGNALPLTEQQPRDADDERSGLLSGHDNEHV) is disordered. Residues 302–321 (QPRDADDERSGLLSGHDNEH) are compositionally biased toward basic and acidic residues. Transmembrane regions (helical) follow at residues 434-454 (FVIG…ASLL), 483-503 (GLPT…YEWL), 524-544 (FFFS…ASGF), 560-582 (TIAL…LLIL), 587-608 (LFPF…FLSA), 623-645 (FSYG…YSVF), 650-672 (LICL…QLLY), 687-707 (MICN…IGVL), and 713-733 (ITRS…SYWF). The segment at 754–777 (PGGGDISPSPSSTLSPPSGLDRDS) is disordered. The segment covering 759-771 (ISPSPSSTLSPPS) has biased composition (low complexity).

It belongs to the CSC1 (TC 1.A.17) family.

It localises to the vacuole membrane. Functionally, vacuolar transmembrane transporter that participates in the first stage of the beta-lactam biosynthesis (the formation of the ACV tripeptide), probably taking part in the supply of amino acids from the vacuolar lumen to the vacuole-anchored ACV synthetase. The chain is Vacuolar transmembrane transporter penV from Penicillium rubens (strain ATCC 28089 / DSM 1075 / NRRL 1951 / Wisconsin 54-1255) (Penicillium chrysogenum).